The sequence spans 805 residues: Zinc finger CCCH domain-containing protein 11B (805 aa).

2 consecutive C3H1-type zinc fingers follow at residues 2 to 29 (PNQG…HCEA) and 31 to 57 (LGNE…HMEI). Disordered regions lie at residues 140 to 194 (KVES…GLRV), 223 to 351 (KKMK…DKVN), 364 to 433 (MLLE…TCIK), 449 to 468 (IVAS…SMQE), 481 to 506 (KALR…PGAR), and 715 to 805 (VTVP…PLEL). Acidic residues predominate over residues 160 to 175 (ADDDEDDDDQFSEEGD). A compositionally biased stretch (basic and acidic residues) spans 364–390 (MLLERASQKHGESQTKLKTEGPSKTDD). Residues 391-402 (STSGARSSSTIR) show a composition bias toward polar residues. Positions 403–423 (IKTFSEVLAEEEHRQQEAERQ) form a coiled coil. Composition is skewed to basic and acidic residues over residues 412-433 (EEEH…TCIK) and 455-468 (QSEE…SMQE). Low complexity-rich tracts occupy residues 486 to 498 (QQSS…SPSQ) and 730 to 749 (PPTQ…PSSS). Residues 750–763 (QMSMKTRRLSSAST) show a composition bias toward polar residues. Residues 789–805 (EIDLDPGKDEDDLPLEL) show a composition bias toward acidic residues.

Its function is as follows. May play a role in mRNA transport. The polypeptide is Zinc finger CCCH domain-containing protein 11B (Homo sapiens (Human)).